The following is a 394-amino-acid chain: uncharacterized protein (394 aa).

Transmembrane regions (helical) follow at residues 22–42, 60–80, 81–101, 231–251, 271–291, 303–323, 328–348, and 355–375; these read VLVSLFGVSLLLLCLAGVLLH, LALFDLHGLIGIWGLPWLLLF, GFTGALSGLGALGTLLLAPVA, LHLAMGLGACLLCASGLYLWL, GFCAGLVAAAALLLLGLQLAP, LFLVLWAAAGLAALLLPGDWP, LLGVAGLACLAAAVAHLAPWL, and ALGPDLTLILCGALLIRHAWM.

The protein resides in the cell membrane. This is an uncharacterized protein from Pseudomonas aeruginosa (strain ATCC 15692 / DSM 22644 / CIP 104116 / JCM 14847 / LMG 12228 / 1C / PRS 101 / PAO1).